The following is a 171-amino-acid chain: N5-carboxyaminoimidazole ribonucleotide mutase (171 aa).

Positions 13, 16, and 43 each coordinate substrate.

The protein belongs to the AIR carboxylase family. Class I subfamily.

The catalysed reaction is 5-carboxyamino-1-(5-phospho-D-ribosyl)imidazole + H(+) = 5-amino-1-(5-phospho-D-ribosyl)imidazole-4-carboxylate. It functions in the pathway purine metabolism; IMP biosynthesis via de novo pathway; 5-amino-1-(5-phospho-D-ribosyl)imidazole-4-carboxylate from 5-amino-1-(5-phospho-D-ribosyl)imidazole (N5-CAIR route): step 2/2. Catalyzes the conversion of N5-carboxyaminoimidazole ribonucleotide (N5-CAIR) to 4-carboxy-5-aminoimidazole ribonucleotide (CAIR). The sequence is that of N5-carboxyaminoimidazole ribonucleotide mutase from Mycobacterium leprae (strain TN).